A 36-amino-acid polypeptide reads, in one-letter code: Peruvianin-1 (36 aa).

Belongs to the germin family. As to quaternary structure, homohexamer, possibly consisting of a trimer of dimers. Glycosylated.

Inhibited by iodoacetamide and trans-epoxysuccinyl-L-leucylamido(4-guanidino)butane (E-64) but not by phenylmethylsulfonyl fluoride (PMSF), pepstatin-A, ethylenediamine tetra acetic acid (EDTA) or ethylene glycol tetraacetic acid (EGTA). Functionally, cysteine protease able to degrade azocasein and benzoyl-arginine-beta-naphtylamide (BANA) in vitro. The protein is Peruvianin-1 of Thevetia peruviana (Yellow oleander).